A 224-amino-acid polypeptide reads, in one-letter code: Uracil phosphoribosyltransferase (224 aa).

Arg-92 is a binding site for 5-phospho-alpha-D-ribose 1-diphosphate. Lys-109 contacts GTP. 5-phospho-alpha-D-ribose 1-diphosphate contacts are provided by residues Arg-117 and 145–153 (DPMLATGGT). Uracil-binding positions include Ile-210 and 215 to 217 (GDA). Asp-216 lines the 5-phospho-alpha-D-ribose 1-diphosphate pocket.

Belongs to the UPRTase family. Mg(2+) is required as a cofactor.

The enzyme catalyses UMP + diphosphate = 5-phospho-alpha-D-ribose 1-diphosphate + uracil. Its pathway is pyrimidine metabolism; UMP biosynthesis via salvage pathway; UMP from uracil: step 1/1. Its activity is regulated as follows. Allosterically activated by GTP. Functionally, catalyzes the conversion of uracil and 5-phospho-alpha-D-ribose 1-diphosphate (PRPP) to UMP and diphosphate. This is Uracil phosphoribosyltransferase (UPP) from Nicotiana tabacum (Common tobacco).